A 620-amino-acid polypeptide reads, in one-letter code: 1-deoxy-D-xylulose-5-phosphate synthase (620 aa).

Residues His-80 and 121-123 (GHS) contribute to the thiamine diphosphate site. A Mg(2+)-binding site is contributed by Asp-152. Thiamine diphosphate is bound by residues 153 to 154 (GA), Asn-181, Tyr-288, and Glu-370. A Mg(2+)-binding site is contributed by Asn-181.

The protein belongs to the transketolase family. DXPS subfamily. In terms of assembly, homodimer. Mg(2+) serves as cofactor. Thiamine diphosphate is required as a cofactor.

The enzyme catalyses D-glyceraldehyde 3-phosphate + pyruvate + H(+) = 1-deoxy-D-xylulose 5-phosphate + CO2. Its pathway is metabolic intermediate biosynthesis; 1-deoxy-D-xylulose 5-phosphate biosynthesis; 1-deoxy-D-xylulose 5-phosphate from D-glyceraldehyde 3-phosphate and pyruvate: step 1/1. Its function is as follows. Catalyzes the acyloin condensation reaction between C atoms 2 and 3 of pyruvate and glyceraldehyde 3-phosphate to yield 1-deoxy-D-xylulose-5-phosphate (DXP). The protein is 1-deoxy-D-xylulose-5-phosphate synthase of Shigella boydii serotype 18 (strain CDC 3083-94 / BS512).